Here is a 519-residue protein sequence, read N- to C-terminus: Glutamate--cysteine ligase (519 aa).

Belongs to the glutamate--cysteine ligase type 1 family. Type 1 subfamily.

It catalyses the reaction L-cysteine + L-glutamate + ATP = gamma-L-glutamyl-L-cysteine + ADP + phosphate + H(+). Its pathway is sulfur metabolism; glutathione biosynthesis; glutathione from L-cysteine and L-glutamate: step 1/2. In Photorhabdus laumondii subsp. laumondii (strain DSM 15139 / CIP 105565 / TT01) (Photorhabdus luminescens subsp. laumondii), this protein is Glutamate--cysteine ligase.